The primary structure comprises 469 residues: MSEDLSMKCGLEIHVQVDTNSKLFCQCPTNYKDVEPNTNICPVCIGHPGAKPMPPNKKAIDMAIMVAKMLGCEMVIDKDIYFQRKHYNYPDLPSGYQKTSVPIGEHGTFLGVGITEVHLEEDPGQYKPDLGTVDYNRSGTPLIEIVTDPDMKSPEEAREFLRQLLRLFRYIGNLRGEGTMRADTNISIKYNGIQGNRVEVKNVNSIRGVYKVLKYELIRQKNVLRRGGEIKLETRAFMESQMITKGMRSKETADDYRYIPDPDLQPIVLSNDWVEKVEAQMPETPMNKEKRFVEQYGIKEDDAKVLVSDLELADVFEKVVAELGNDKDGISLAVTWIRNELKRVLVYNKIEFFETNLKPEHMVELINSIKDKTISQKIGKTIIEQMVEHKGEKTPKELISEMGLTVIEDTSELEKACEEAIKNSEKAIEDYKSGNQRALNSVVGQVMKLTRGRAEPGTVVEILKKKIDG.

Belongs to the GatB/GatE family. GatB subfamily. In terms of assembly, heterotrimer of A, B and C subunits.

The enzyme catalyses L-glutamyl-tRNA(Gln) + L-glutamine + ATP + H2O = L-glutaminyl-tRNA(Gln) + L-glutamate + ADP + phosphate + H(+). It catalyses the reaction L-aspartyl-tRNA(Asn) + L-glutamine + ATP + H2O = L-asparaginyl-tRNA(Asn) + L-glutamate + ADP + phosphate + 2 H(+). Its function is as follows. Allows the formation of correctly charged Asn-tRNA(Asn) or Gln-tRNA(Gln) through the transamidation of misacylated Asp-tRNA(Asn) or Glu-tRNA(Gln) in organisms which lack either or both of asparaginyl-tRNA or glutaminyl-tRNA synthetases. The reaction takes place in the presence of glutamine and ATP through an activated phospho-Asp-tRNA(Asn) or phospho-Glu-tRNA(Gln). The polypeptide is Aspartyl/glutamyl-tRNA(Asn/Gln) amidotransferase subunit B (Methanococcus maripaludis (strain C7 / ATCC BAA-1331)).